Consider the following 864-residue polypeptide: MGNRGMEDLIPLVNRLQDAFSAIGQNADLDLPQIAVVGGQSAGKSSVLENFVGRDFLPRGSGIVTRRPLVLQLVNATTEYAEFLHCKGKKFTDFEEVRLEIEAETDRVTGTNKGISPVPINLRVYSPHVLNLTLVDLPGMTKVPVGDQPPDIEFQIRDMLMQFVTKENCLILAVSPANSDLANSDALKVAKEVDPQGQRTIGVITKLDLMDEGTDARDVLENKLLPLRRGYIGVVNRSQKDIDGKKDITAALAAERKFFLSHPSYRHLADRMGTPYLQKVLNQQLTNHIRDTLPGLRNKLQSQLLSIEKEVEEYKNFRPDDPARKTKALLQMVQQFAVDFEKRIEGSGDQIDTYELSGGARINRIFHERFPFELVKMEFDEKELRREISYAIKNIHGIRTGLFTPDMAFETIVKKQVKKIREPCLKCVDMVISELISTVRQCTKKLQQYPRLREEMERIVTTHIREREGRTKEQVMLLIDIELAYMNTNHEDFIGFANAQQRSNQMNKKKTSGNQDEILVIRKGWLTINNIGIMKGGSKEYWFVLTAENLSWYKDDEEKEKKYMLSVDNLKLRDVEKGFMSSKHIFALFNTEQRNVYKDYRQLELACETQEEVDSWKASFLRAGVYPERVGDKEKASETEENGSDSFMHSMDPQLERQVETIRNLVDSYMAIVNKTVRDLMPKTIMHLMINNTKEFIFSELLANLYSCGDQNTLMEESAEQAQRRDEMLRMYHALKEALSIIGDINTTTVSTPMPPPVDDSWLQVQSVPAGRRSPTSSPTPQRRAPAVPPARPGSRGPAPGPPPAGSALGGAPPVPSRPGASPDPFGPPPQVPSRPNRAPPGVPSRSGQASPSRPESPRPPFDL.

The Dynamin-type G domain maps to 28-294 (DLDLPQIAVV…LTNHIRDTLP (267 aa)). The segment at 38–45 (GGQSAGKS) is G1 motif. S41, G43, K44, S45, S46, R59, and G60 together coordinate GDP. Residues 64–66 (VTR) form a G2 motif region. Phosphotyrosine is present on Y80. Y125 is subject to 3'-nitrotyrosine; alternate. Y125 carries the phosphotyrosine; alternate modification. The segment at 136–139 (DLPG) is G3 motif. Residues 205–208 (TKLD) form a G4 motif region. Residues K206, D208, D211, N236, R237, and Q239 each contribute to the GDP site. A G5 motif region spans residues 235–238 (VNRS). A phosphoserine mark is found at S306 and S347. Residue Y354 is modified to Phosphotyrosine. A Phosphoserine modification is found at S512. The PH domain occupies 519-625 (LVIRKGWLTI…WKASFLRAGV (107 aa)). The GED domain maps to 659 to 750 (VETIRNLVDS…IIGDINTTTV (92 aa)). The interval 767–864 (SVPAGRRSPT…PESPRPPFDL (98 aa)) is disordered. Position 774 is a phosphoserine; by GSK3-beta (S774). A Phosphoserine modification is found at S778. R796 bears the Omega-N-methylarginine mark. At S822 the chain carries Phosphoserine. A compositionally biased stretch (pro residues) spans 825–843 (PFGPPPQVPSRPNRAPPGV). Residues S851 and S857 each carry the phosphoserine modification.

It belongs to the TRAFAC class dynamin-like GTPase superfamily. Dynamin/Fzo/YdjA family. Homodimer; homodimerization is mediated by the dynamin-type G domain which promotes assembly-stimulated GTPase activity. Homo-tetramer formed from two dimers in the absence of lipid. Oligomerizes into a helical polymer that self-assembles around the vesicle membrane, when associated to the menbrane through lipid binding. Interacts (via C-terminal proline-rich domain (PRD)) with SNX9 (via SH3 domain); this interaction allows regulation of DNM1 self-assembly during late stages of endocytic vesicle formation and supports DNM1's early functions in accelerating clathrin-coated pits (CCPs) maturation in non neuronals cell. Interacts (via C-terminal proline-rich domain (PRD)) with MYO1E (via SH3 domain); this interaction regulates receptor-mediated endocytosis. Interacts with SNX33 (via SH3 domain); this interaction decreases DNM1-dependent endocytosis. Interacts with DIAPH1. Interacts with GRB2 (via SH3 domain); this interaction mediates disassembly of DNM1 polymers, therefore modulates self-assembly. Forms a complex with BIN1 (via SH3 domain) and SH3GL2 (via SH3 domain). Forms a complex with SH3GL2 (via SH3 domain) and AMPH (via SH3 domain). Forms a complex with SH3GL2 (via SH3 domain) and SYNJ1. Interacts with AMPH. Interacts (via C-terminal proline-rich domain (PRD)) with SYT1; this interaction facilitates vesicle fission during clathrin-mediated endocytosis (CME). Interacts (via C-terminal proline-rich domain (PRD)) with PLCG1 (via SH3 domain); this interaction stimulates the release of GDP from DNM1 and enhances DNM1-dependent endocytosis. Interacts with SNPH; this interaction inhibits the binding of DNM1 to AMPH and DNM1-receptor-mediated endocytosis. Interacts with CAV1. Interacts with SH3GLB1 (via SH3 domain). Interacts with PACSIN1 (via SH3 domain), PACSIN2 (via SH3 domain) and PACSIN3 (via SH3 domain). Interacts with UNC119; this interaction decreases DNM1's GTPase activity and affects DNM1's interaction with AMPH. Interacts (GTP-bound form) with DNAJC6; this interaction allows clathrin-coated vesicle (CCV) formation at the plasma membrane. Phosphorylation at Ser-774 by GSK3B/GSK3-beta leads to inactivation of receptor-mediated endocytosis in non-neuronal cells. Dephosphorylation at Ser-774, through the EGFR downstream signaling, leads to activation and regulates early stages of clathrin-mediated endocytosis (CME). Phosphorylated by CDK5 leading to synaptic vesicle endocytosis (SVE) activation.

The protein resides in the cell membrane. The protein localises to the membrane. It is found in the clathrin-coated pit. Its subcellular location is the cytoplasmic vesicle. It localises to the presynapse. The protein resides in the secretory vesicle. The protein localises to the chromaffin granule. It carries out the reaction GTP + H2O = GDP + phosphate + H(+). Its activity is regulated as follows. GTPase activity is activated by 1-phosphatidyl-1D-myo-inositol 4,5-bisphosphate. GTPase activity is inhibited by the heterodimer G protein formed by GNB1 and GNG2 with an IC(50)=400 nM when DNM1 concentration is 5 nM. Catalyzes the hydrolysis of GTP and utilizes this energy to mediate vesicle scission and participates in many forms of endocytosis, such as clathrin-mediated endocytosis or synaptic vesicle endocytosis as well as rapid endocytosis (RE). Associates to the membrane, through lipid binding, and self-assembles into rings and stacks of interconnected rings through oligomerization to form a helical polymer around the vesicle membrane leading to constriction of invaginated coated pits around their necks. Self-assembly of the helical polymer induces membrane tubules narrowing until the polymer reaches a length sufficient to trigger GTP hydrolysis. Depending on the curvature imposed on the tubules, membrane detachment from the helical polymer upon GTP hydrolysis can cause spontaneous hemifission followed by complete fission. May play a role in regulating early stages of clathrin-mediated endocytosis in non-neuronal cells through its activation by dephosphorylation via the signaling downstream of EGFR. Controls vesicle size at a step before fission, during formation of membrane pits, at hippocampal synapses. Controls plastic adaptation of the synaptic vesicle recycling machinery to high levels of activity. Mediates rapid endocytosis (RE), a Ca(2+)-dependent and clathrin- and K(+)-independent process in chromaffin cells. Microtubule-associated force-producing protein involved in producing microtubule bundles and able to bind and hydrolyze GTP. Through its interaction with DNAJC6, acts during the early steps of clathrin-coated vesicle (CCV) formation. This is Dynamin-1 from Homo sapiens (Human).